The chain runs to 141 residues: Alpha-lactalbumin (141 aa).

The signal sequence occupies residues 1 to 19 (MMSFVSLLVVGILFPAIQA). A C-type lysozyme domain is found at 20–141 (KQFTKCELSQ…KLDQWLCEKM (122 aa)). 4 disulfides stabilise this stretch: C25/C138, C47/C129, C80/C95, and C91/C109. Ca(2+) contacts are provided by K97, D100, D102, D105, and D106.

The protein belongs to the glycosyl hydrolase 22 family. Lactose synthase (LS) is a heterodimer of a catalytic component, beta1,4-galactosyltransferase (beta4Gal-T1) and a regulatory component, alpha-lactalbumin (LA). Mammary gland specific. Secreted in milk.

It is found in the secreted. Regulatory subunit of lactose synthase, changes the substrate specificity of galactosyltransferase in the mammary gland making glucose a good acceptor substrate for this enzyme. This enables LS to synthesize lactose, the major carbohydrate component of milk. In other tissues, galactosyltransferase transfers galactose onto the N-acetylglucosamine of the oligosaccharide chains in glycoproteins. The protein is Alpha-lactalbumin (LALBA) of Sus scrofa (Pig).